The following is a 280-amino-acid chain: Dihydropteroate synthase (280 aa).

The Pterin-binding domain maps to 1–265; sequence MSPAPVQVMG…DVRASVDAIK (265 aa). Asn13 lines the Mg(2+) pocket. Residues Asp86, Asn105, Asp177, Lys213, and 253–255 each bind (7,8-dihydropterin-6-yl)methyl diphosphate; that span reads RVH.

It belongs to the DHPS family. As to quaternary structure, homodimer. The cofactor is Mg(2+).

It carries out the reaction (7,8-dihydropterin-6-yl)methyl diphosphate + 4-aminobenzoate = 7,8-dihydropteroate + diphosphate. The protein operates within cofactor biosynthesis; tetrahydrofolate biosynthesis; 7,8-dihydrofolate from 2-amino-4-hydroxy-6-hydroxymethyl-7,8-dihydropteridine diphosphate and 4-aminobenzoate: step 1/2. Catalyzes the condensation of para-aminobenzoate (pABA) with 6-hydroxymethyl-7,8-dihydropterin diphosphate (DHPt-PP) to form 7,8-dihydropteroate (H2Pte), the immediate precursor of folate derivatives. The chain is Dihydropteroate synthase (folP1) from Mycobacterium bovis (strain ATCC BAA-935 / AF2122/97).